We begin with the raw amino-acid sequence, 614 residues long: Sulfite reductase [NADPH] flavoprotein alpha-component (614 aa).

In terms of domain architecture, Flavodoxin-like spans 79 to 217 (LTIIFASQTG…AATEWRKQVL (139 aa)). Residues 85–90 (SQTGNA), 132–135 (STNG), and 168–177 (LGDSSYQFFC) each bind FMN. Residues 249–463 (EQPYTASLST…VEHNNNFKLP (215 aa)) enclose the FAD-binding FR-type domain. Residues Thr337, Thr371, 401–404 (RLYS), 419–421 (TVG), Tyr425, and 434–437 (GGAS) each bind FAD. NADP(+)-binding positions include 534 to 535 (SR), 540 to 544 (KVYVQ), and Asp576. Tyr614 contributes to the FAD binding site.

It belongs to the NADPH-dependent sulphite reductase flavoprotein subunit CysJ family. This sequence in the N-terminal section; belongs to the flavodoxin family. The protein in the C-terminal section; belongs to the flavoprotein pyridine nucleotide cytochrome reductase family. Alpha(8)-beta(8). The alpha component is a flavoprotein, the beta component is a hemoprotein. FAD is required as a cofactor. It depends on FMN as a cofactor.

The enzyme catalyses hydrogen sulfide + 3 NADP(+) + 3 H2O = sulfite + 3 NADPH + 4 H(+). The protein operates within sulfur metabolism; hydrogen sulfide biosynthesis; hydrogen sulfide from sulfite (NADPH route): step 1/1. Component of the sulfite reductase complex that catalyzes the 6-electron reduction of sulfite to sulfide. This is one of several activities required for the biosynthesis of L-cysteine from sulfate. The flavoprotein component catalyzes the electron flow from NADPH -&gt; FAD -&gt; FMN to the hemoprotein component. The sequence is that of Sulfite reductase [NADPH] flavoprotein alpha-component from Vibrio cholerae serotype O1 (strain ATCC 39315 / El Tor Inaba N16961).